The sequence spans 153 residues: UPAR/Ly6 domain-containing protein cold (153 aa).

Positions 1 to 25 (MKSWEIAVVLVAAVYLCSQVNFVAG) are cleaved as a signal peptide. Over 26-130 (LECYVCSNQT…FVISGAPSRQ (105 aa)) the chain is Extracellular. 6 disulfide bridges follow: cysteine 28–cysteine 55, cysteine 31–cysteine 41, cysteine 48–cysteine 81, cysteine 87–cysteine 112, cysteine 99–cysteine 109, and cysteine 113–cysteine 118. Asparagine 33 carries an N-linked (GlcNAc...) asparagine glycan. Serine 124 carries GPI-anchor amidated serine lipidation. Positions 125-153 (GAPSRQGYGVCLTLLTALLGLGSWLIPRS) are cleaved as a propeptide — removed in mature form. Residues 131-151 (GYGVCLTLLTALLGLGSWLIP) form a helical membrane-spanning segment. Over 152-153 (RS) the chain is Cytoplasmic.

The protein belongs to the snake toxin-like superfamily. In terms of processing, GPI-anchored. Expressed in all tissues that form septate junctions, including hindgut, trachea, epidermis and dorsal pouch. Expressed in subperineurial glial cells that form the hemolymph-brain barrier of the central nervous system.

It is found in the endosome membrane. The protein resides in the endoplasmic reticulum membrane. It localises to the cell membrane. Its subcellular location is the cell junction. The protein localises to the septate junction. Its function is as follows. Required for septate junction assembly, possibly by organizing the preassembly and transport of septate junction proteins such as dlg1/disks large 1 and Nrx-IV/Neurexin-IV. Involved in paracellular barrier functions of trachea, hindgut and salivary gland mediated by epithelial cell septate junctions. Involved in paracellular barrier functions of the hemolymph-brain barrier (insect blood-brain barrier) mediated by glial cell septate junctions. Required for maintenance of septate junctions in imaginal disk epithelial cells. Involved in the epithelial cell wound-healing response. Directly or indirectly mediates cell-cell adhesion during septate junction formation. The chain is UPAR/Ly6 domain-containing protein cold from Drosophila melanogaster (Fruit fly).